The following is a 177-amino-acid chain: ATP synthase subunit delta (177 aa).

Belongs to the ATPase delta chain family. F-type ATPases have 2 components, F(1) - the catalytic core - and F(0) - the membrane proton channel. F(1) has five subunits: alpha(3), beta(3), gamma(1), delta(1), epsilon(1). F(0) has three main subunits: a(1), b(2) and c(10-14). The alpha and beta chains form an alternating ring which encloses part of the gamma chain. F(1) is attached to F(0) by a central stalk formed by the gamma and epsilon chains, while a peripheral stalk is formed by the delta and b chains.

Its subcellular location is the cell inner membrane. F(1)F(0) ATP synthase produces ATP from ADP in the presence of a proton or sodium gradient. F-type ATPases consist of two structural domains, F(1) containing the extramembraneous catalytic core and F(0) containing the membrane proton channel, linked together by a central stalk and a peripheral stalk. During catalysis, ATP synthesis in the catalytic domain of F(1) is coupled via a rotary mechanism of the central stalk subunits to proton translocation. Its function is as follows. This protein is part of the stalk that links CF(0) to CF(1). It either transmits conformational changes from CF(0) to CF(1) or is implicated in proton conduction. This chain is ATP synthase subunit delta, found in Vibrio cholerae serotype O1 (strain ATCC 39541 / Classical Ogawa 395 / O395).